A 362-amino-acid chain; its full sequence is Lipoprotein p35 (362 aa).

The first 30 residues, Met1–Ser30, serve as a signal peptide directing secretion. A lipid anchor (N-palmitoyl cysteine) is attached at Cys31. Cys31 is lipidated: S-diacylglycerol cysteine. The tract at residues Ser33–Gln53 is disordered.

It belongs to the p35 lipoprotein family. Post-translationally, the N-terminus is blocked.

It localises to the cell membrane. Major M.penetrans antigen. The sequence is that of Lipoprotein p35 from Malacoplasma penetrans (Mycoplasma penetrans).